Reading from the N-terminus, the 168-residue chain is Endoribonuclease YbeY (168 aa).

Zn(2+)-binding residues include histidine 126, histidine 130, and histidine 136.

Belongs to the endoribonuclease YbeY family. Requires Zn(2+) as cofactor.

The protein localises to the cytoplasm. Functionally, single strand-specific metallo-endoribonuclease involved in late-stage 70S ribosome quality control and in maturation of the 3' terminus of the 16S rRNA. The polypeptide is Endoribonuclease YbeY (Sinorhizobium medicae (strain WSM419) (Ensifer medicae)).